A 172-amino-acid chain; its full sequence is Peptidyl-prolyl cis-trans isomerase (172 aa).

The PPIase cyclophilin-type domain occupies 7–170 (FFDMTVGGAP…KVVKVADCGQ (164 aa)).

Belongs to the cyclophilin-type PPIase family.

It localises to the cytoplasm. It carries out the reaction [protein]-peptidylproline (omega=180) = [protein]-peptidylproline (omega=0). With respect to regulation, binds cyclosporin A (CsA). CsA mediates some of its effects via an inhibitory action on PPIase. PPIases accelerate the folding of proteins. It catalyzes the cis-trans isomerization of proline imidic peptide bonds in oligopeptides. This chain is Peptidyl-prolyl cis-trans isomerase (CYP), found in Zea mays (Maize).